Reading from the N-terminus, the 234-residue chain is Thiamine-phosphate synthase (234 aa).

4-amino-2-methyl-5-(diphosphooxymethyl)pyrimidine contacts are provided by residues 65–69 and Asn-97; that span reads QYRNK. Residues Asp-98 and Asp-117 each contribute to the Mg(2+) site. Ser-136 is a 4-amino-2-methyl-5-(diphosphooxymethyl)pyrimidine binding site. 2-[(2R,5Z)-2-carboxy-4-methylthiazol-5(2H)-ylidene]ethyl phosphate is bound at residue 163–165; the sequence is SHT. Residue Lys-166 participates in 4-amino-2-methyl-5-(diphosphooxymethyl)pyrimidine binding. Residues Gly-192 and 212–213 each bind 2-[(2R,5Z)-2-carboxy-4-methylthiazol-5(2H)-ylidene]ethyl phosphate; that span reads IS.

Belongs to the thiamine-phosphate synthase family. It depends on Mg(2+) as a cofactor.

The enzyme catalyses 2-[(2R,5Z)-2-carboxy-4-methylthiazol-5(2H)-ylidene]ethyl phosphate + 4-amino-2-methyl-5-(diphosphooxymethyl)pyrimidine + 2 H(+) = thiamine phosphate + CO2 + diphosphate. It catalyses the reaction 2-(2-carboxy-4-methylthiazol-5-yl)ethyl phosphate + 4-amino-2-methyl-5-(diphosphooxymethyl)pyrimidine + 2 H(+) = thiamine phosphate + CO2 + diphosphate. It carries out the reaction 4-methyl-5-(2-phosphooxyethyl)-thiazole + 4-amino-2-methyl-5-(diphosphooxymethyl)pyrimidine + H(+) = thiamine phosphate + diphosphate. It participates in cofactor biosynthesis; thiamine diphosphate biosynthesis; thiamine phosphate from 4-amino-2-methyl-5-diphosphomethylpyrimidine and 4-methyl-5-(2-phosphoethyl)-thiazole: step 1/1. Functionally, condenses 4-methyl-5-(beta-hydroxyethyl)thiazole monophosphate (THZ-P) and 2-methyl-4-amino-5-hydroxymethyl pyrimidine pyrophosphate (HMP-PP) to form thiamine monophosphate (TMP). The polypeptide is Thiamine-phosphate synthase (Xylella fastidiosa (strain 9a5c)).